The sequence spans 734 residues: MVPLAYYGQHFVPLDYFYQLSSANTLTHQHTGEKLNQFNNQPMAKVQSHSNHFAVPPLGSNKKVQRCSVLPSPKSQDKISQSFCDRFLNSPLFHAKHQNTPSIGLHWRSSLWPAQRALNSHLLHSKAQTTSSSDLNMTSSLELNQAALSLQLPFCKPQTTSSSLDVCWRSLSLKSHQRVSSSSLFRLQNQEIPSINIIWTSSSLGPKRKALSSTLLQSKPQKTSSLDYLWTSSLQRNQRSLSSPSLNTKLQTSDLFWTSPSFKPNQIALTSPLLDSRLQKTPILNSNPTIGGLPVSHSKARQSASSYFVHPSENLPLFQLNSQSMFMLDCNFQTTNSPVCHSKFQNTTSPNGKHRVTHLPSPHPKTNISGQLLSSSKHCTRNTAASTLGFRLQSKSSFQFSPKTESNKEIPWTLKYSQPCIVKGGTVPDDVVNKIVNSISNTRIQRDLCRQILFRRMRGRPNPHPGPRLSSNYVVCLACASCLKSPCNHLRGKKNPHCATLSVIPTPEANSEGKIEVKLVLILSLPETFSSCLPFPMKENQPNEVPEDNLEGVEKIQQFFPTSERDIQGLNMKQIWWAVAPENKVIGQQPQAIDWLFYVKKNNSQPQSLLPSTSSSTSSSSTTSSSSSVASASSDSSSSSSSSSSFSISSSSSPSKEFMTLTLSRPVFRKVLSYHRLPAGVSWLEFIYSKDYQLHPRKPNRSQSSSLKTKPVRNNNTVKWRKGANTLFKFFRTK.

The disordered stretch occupies residues 608 to 654 (SLLPSTSSSTSSSSTTSSSSSVASASSDSSSSSSSSSSFSISSSSSP). The span at 612-654 (STSSSTSSSSTTSSSSSVASASSDSSSSSSSSSSFSISSSSSP) shows a compositional bias: low complexity.

As to quaternary structure, interacts (via C-terminus) with CSNK2A2. Post-translationally, phosphorylated by CK2 (casein kinase II), specifically by complexes containing catalytic subunit CSNK2A2.

The protein resides in the nucleus. In terms of biological role, may play a role in chromatin regulation of male germ cells. The chain is Casein kinase II subunit alpha'-interacting protein from Homo sapiens (Human).